Reading from the N-terminus, the 238-residue chain is Small ribosomal subunit protein uS2 (238 aa).

It belongs to the universal ribosomal protein uS2 family.

This chain is Small ribosomal subunit protein uS2, found in Haemophilus ducreyi (strain 35000HP / ATCC 700724).